Consider the following 942-residue polypeptide: Diacylglycerol kinase theta (942 aa).

Positions 1–59 (MAAAAEPGARAWLGGGSPRPGSPACSPVLGSGGRARPGPGPGPGPERAGVRAPGPAAAP) are disordered. Phosphoserine occurs at positions 22 and 26. A compositionally biased stretch (low complexity) spans 45–59 (PERAGVRAPGPAAAP). 3 consecutive Phorbol-ester/DAG-type zinc fingers follow at residues 60-108 (GHSF…RIPC), 121-168 (AHCF…CSDC), and 183-234 (HHHW…APEC). The interval 269–295 (EPGEGGDGADGSAAVGPGRETQATPES) is disordered. A Ras-associating domain is found at 395 to 494 (AQEVLKIYPG…TRFYVAESRD (100 aa)). 2 short sequence motifs (LXXLL motif) span residues 555–559 (LYMLL) and 574–578 (LPDLL). In terms of domain architecture, DAGKc spans 584 to 721 (PDSCPLLVFV…MDRWTILLDA (138 aa)). Positions 908-942 (PKVHMLRKAKQKPRRAGTTRDARADAAPAPESDPR) are disordered. A compositionally biased stretch (basic residues) spans 911–924 (HMLRKAKQKPRRAG). Positions 932–942 (DAAPAPESDPR) are enriched in low complexity.

This sequence belongs to the eukaryotic diacylglycerol kinase family. Interacts with RHOA (constitutively activated, GTP-bound); the interaction inhibits DGKQ. Interacts with PRKCE. Interacts with PRKCH. Interacts with PLCB1. Interacts with NR5A1; the interaction requires both LXXLL motifs in DGKQ and is required for full phosphatidic acid-mediated activation of NR5A1. In terms of processing, phosphorylated by PRKCE and PRKCH in vitro.

The protein localises to the cytoplasm. The protein resides in the cytosol. It is found in the cell membrane. It localises to the synapse. Its subcellular location is the cytoskeleton. The protein localises to the nucleus. The protein resides in the nucleus speckle. It is found in the nucleus matrix. It carries out the reaction a 1,2-diacyl-sn-glycerol + ATP = a 1,2-diacyl-sn-glycero-3-phosphate + ADP + H(+). The catalysed reaction is a 1-O-alkyl-sn-glycerol + ATP = a 1-O-alkyl-sn-glycero-3-phosphate + ADP + H(+). The enzyme catalyses 1-O-alkyl-2-acyl-sn-glycerol + ATP = 1-O-alkyl-2-acyl-sn-glycero-3-phosphate + ADP + H(+). It catalyses the reaction 1,2-di-(9Z-octadecenoyl)-sn-glycerol + ATP = 1,2-di-(9Z-octadecenoyl)-sn-glycero-3-phosphate + ADP + H(+). It carries out the reaction 1-O-hexadecyl-sn-glycerol + ATP = 1-O-hexadecyl-sn-glycero-3-phosphate + ADP + H(+). The catalysed reaction is 1-O-hexadecyl-2-acetyl-sn-glycerol + ATP = 1-O-hexadecyl-2-acetyl-sn-glycero-3-phosphate + ADP + H(+). The enzyme catalyses 1-octadecanoyl-2-(5Z,8Z,11Z,14Z-eicosatetraenoyl)-sn-glycerol + ATP = 1-octadecanoyl-2-(5Z,8Z,11Z,14Z-eicosatetraenoyl)-sn-glycero-3-phosphate + ADP + H(+). It functions in the pathway lipid metabolism; glycerolipid metabolism. Its activity is regulated as follows. Activated by phosphatidylserine. Diacylglycerol kinase that converts diacylglycerol/DAG into phosphatidic acid/phosphatidate/PA and regulates the respective levels of these two bioactive lipids. Thereby, acts as a central switch between the signaling pathways activated by these second messengers with different cellular targets and opposite effects in numerous biological processes. Within the adrenocorticotropic hormone signaling pathway, produces phosphatidic acid which in turn activates NR5A1 and subsequent steroidogenic gene transcription. Also functions downstream of the nerve growth factor signaling pathway being specifically activated in the nucleus by the growth factor. Through its diacylglycerol activity also regulates synaptic vesicle endocytosis. This Homo sapiens (Human) protein is Diacylglycerol kinase theta.